Consider the following 467-residue polypeptide: Fumarate hydratase class II (467 aa).

Substrate-binding positions include 98–100, arginine 126, 129–132, 139–141, and threonine 187; these read SGT, HPND, and SSN. Histidine 188 serves as the catalytic Proton donor/acceptor. The active site involves serine 318. Residues serine 319 and 324–326 each bind substrate; that span reads KVN.

It belongs to the class-II fumarase/aspartase family. Fumarase subfamily. Homotetramer.

It is found in the cytoplasm. The catalysed reaction is (S)-malate = fumarate + H2O. It functions in the pathway carbohydrate metabolism; tricarboxylic acid cycle; (S)-malate from fumarate: step 1/1. Its function is as follows. Involved in the TCA cycle. Catalyzes the stereospecific interconversion of fumarate to L-malate. The chain is Fumarate hydratase class II from Salmonella typhimurium (strain LT2 / SGSC1412 / ATCC 700720).